Here is a 342-residue protein sequence, read N- to C-terminus: Dihydroorotate dehydrogenase (quinone) (342 aa).

FMN contacts are provided by residues 61–65 and T85; that span reads AGLDK. K65 is a substrate binding site. Residue 110-114 coordinates substrate; the sequence is NRMGF. N138 and N171 together coordinate FMN. A substrate-binding site is contributed by N171. The active-site Nucleophile is S174. A substrate-binding site is contributed by N176. Residues K216 and T244 each coordinate FMN. 245–246 provides a ligand contact to substrate; the sequence is NT. FMN is bound by residues G267, G296, and 317-318; that span reads YS.

Belongs to the dihydroorotate dehydrogenase family. Type 2 subfamily. In terms of assembly, monomer. FMN is required as a cofactor.

The protein resides in the cell membrane. The enzyme catalyses (S)-dihydroorotate + a quinone = orotate + a quinol. It participates in pyrimidine metabolism; UMP biosynthesis via de novo pathway; orotate from (S)-dihydroorotate (quinone route): step 1/1. Catalyzes the conversion of dihydroorotate to orotate with quinone as electron acceptor. This chain is Dihydroorotate dehydrogenase (quinone), found in Pseudomonas aeruginosa (strain LESB58).